A 682-amino-acid polypeptide reads, in one-letter code: DNA ligase (682 aa).

NAD(+) contacts are provided by residues 43-47, 92-93, and D123; these read DSEYD and SL. The active-site N6-AMP-lysine intermediate is the K125. Residues R146, E184, K302, and K326 each coordinate NAD(+). The Zn(2+) site is built by C420, C423, C438, and C443. In terms of domain architecture, BRCT spans 603–682; it reads TTKGFFTGKK…TFLQKLLIVL (80 aa).

This sequence belongs to the NAD-dependent DNA ligase family. LigA subfamily. Requires Mg(2+) as cofactor. Mn(2+) is required as a cofactor.

The catalysed reaction is NAD(+) + (deoxyribonucleotide)n-3'-hydroxyl + 5'-phospho-(deoxyribonucleotide)m = (deoxyribonucleotide)n+m + AMP + beta-nicotinamide D-nucleotide.. Its function is as follows. DNA ligase that catalyzes the formation of phosphodiester linkages between 5'-phosphoryl and 3'-hydroxyl groups in double-stranded DNA using NAD as a coenzyme and as the energy source for the reaction. It is essential for DNA replication and repair of damaged DNA. The chain is DNA ligase from Lawsonia intracellularis (strain PHE/MN1-00).